Reading from the N-terminus, the 104-residue chain is Cell division topological specificity factor (104 aa).

It belongs to the MinE family.

Functionally, prevents the cell division inhibition by proteins MinC and MinD at internal division sites while permitting inhibition at polar sites. This ensures cell division at the proper site by restricting the formation of a division septum at the midpoint of the long axis of the cell. The polypeptide is Cell division topological specificity factor (Sorangium cellulosum (strain So ce56) (Polyangium cellulosum (strain So ce56))).